Reading from the N-terminus, the 172-residue chain is Arginine repressor (172 aa).

The protein belongs to the ArgR family.

Its subcellular location is the cytoplasm. It participates in amino-acid biosynthesis; L-arginine biosynthesis [regulation]. Regulates arginine biosynthesis genes. This chain is Arginine repressor, found in Bifidobacterium adolescentis (strain ATCC 15703 / DSM 20083 / NCTC 11814 / E194a).